A 34-amino-acid chain; its full sequence is Phalloidin proprotein (34 aa).

The propeptide occupies 1-10 (MSDINTTCLP). A cross-link (cyclopeptide (Ala-Pro)) is located at residues 11–17 (AWLATCP). The segment at residues 12-16 (WLATC) is a cross-link (2'-cysteinyl-6'-hydroxytryptophan sulfoxide (Trp-Cys)). The propeptide occupies 18–34 (CTGDDVNPTLTCGESLC).

This sequence belongs to the MSDIN fungal toxin family. Processed by the macrocyclase-peptidase enzyme POPB to yield a toxic cyclic heptapeptide. POPB first removes 10 residues from the N-terminus. Conformational trapping of the remaining peptide forces the enzyme to release this intermediate rather than proceed to macrocyclization. The enzyme rebinds the remaining peptide in a different conformation and catalyzes macrocyclization of the N-terminal 7 residues.

In terms of biological role, toxin that belongs to the bicyclic heptapeptides called phallotoxins. Although structurally related to amatoxins, phallotoxins have a different mode of action, which is the stabilization of F-actin. Phallotoxins are poisonous when administered parenterally, but not orally because of poor absorption. The polypeptide is Phalloidin proprotein (Amanita phalloides (Death cap)).